We begin with the raw amino-acid sequence, 162 residues long: ATP synthase subunit b (162 aa).

Residues 6-28 form a helical membrane-spanning segment; sequence LVTFVLTIVNILVLFYLLKRFLF.

This sequence belongs to the ATPase B chain family. F-type ATPases have 2 components, F(1) - the catalytic core - and F(0) - the membrane proton channel. F(1) has five subunits: alpha(3), beta(3), gamma(1), delta(1), epsilon(1). F(0) has three main subunits: a(1), b(2) and c(10-14). The alpha and beta chains form an alternating ring which encloses part of the gamma chain. F(1) is attached to F(0) by a central stalk formed by the gamma and epsilon chains, while a peripheral stalk is formed by the delta and b chains.

The protein localises to the cell membrane. Its function is as follows. F(1)F(0) ATP synthase produces ATP from ADP in the presence of a proton or sodium gradient. F-type ATPases consist of two structural domains, F(1) containing the extramembraneous catalytic core and F(0) containing the membrane proton channel, linked together by a central stalk and a peripheral stalk. During catalysis, ATP synthesis in the catalytic domain of F(1) is coupled via a rotary mechanism of the central stalk subunits to proton translocation. In terms of biological role, component of the F(0) channel, it forms part of the peripheral stalk, linking F(1) to F(0). The polypeptide is ATP synthase subunit b (Natranaerobius thermophilus (strain ATCC BAA-1301 / DSM 18059 / JW/NM-WN-LF)).